Reading from the N-terminus, the 167-residue chain is Lipoprotein signal peptidase (167 aa).

Helical transmembrane passes span 8-28 (TFLTLLLLASIDWVSKLVVLL), 46-66 (WGHFSFLIIPSFNEGAAFGLF), 68-88 (QYKIPLLIFRVCVILGLALFL), and 101-121 (IALTLILAGALGNVGDILLHG). Active-site residues include Asp125 and Asp143. The helical transmembrane segment at 139–159 (FNLADAFISIGTLLLIGHLYF) threads the bilayer.

It belongs to the peptidase A8 family.

It localises to the cell inner membrane. The enzyme catalyses Release of signal peptides from bacterial membrane prolipoproteins. Hydrolyzes -Xaa-Yaa-Zaa-|-(S,diacylglyceryl)Cys-, in which Xaa is hydrophobic (preferably Leu), and Yaa (Ala or Ser) and Zaa (Gly or Ala) have small, neutral side chains.. It participates in protein modification; lipoprotein biosynthesis (signal peptide cleavage). In terms of biological role, this protein specifically catalyzes the removal of signal peptides from prolipoproteins. This chain is Lipoprotein signal peptidase, found in Chlamydia trachomatis serovar L2b (strain UCH-1/proctitis).